Reading from the N-terminus, the 2290-residue chain is Protein Ycf2 (2290 aa).

Position 1638 to 1645 (1638 to 1645 (GSIGTGRS)) interacts with ATP.

It belongs to the Ycf2 family.

It is found in the plastid. The protein resides in the chloroplast stroma. Probable ATPase of unknown function. Its presence in a non-photosynthetic plant (Epifagus virginiana) and experiments in tobacco indicate that it has an essential function which is probably not related to photosynthesis. The protein is Protein Ycf2 of Phalaenopsis aphrodite subsp. formosana (Moth orchid).